The primary structure comprises 244 residues: Leucyl/phenylalanyl-tRNA--protein transferase (244 aa).

It belongs to the L/F-transferase family.

The protein resides in the cytoplasm. It catalyses the reaction N-terminal L-lysyl-[protein] + L-leucyl-tRNA(Leu) = N-terminal L-leucyl-L-lysyl-[protein] + tRNA(Leu) + H(+). The enzyme catalyses N-terminal L-arginyl-[protein] + L-leucyl-tRNA(Leu) = N-terminal L-leucyl-L-arginyl-[protein] + tRNA(Leu) + H(+). It carries out the reaction L-phenylalanyl-tRNA(Phe) + an N-terminal L-alpha-aminoacyl-[protein] = an N-terminal L-phenylalanyl-L-alpha-aminoacyl-[protein] + tRNA(Phe). Functions in the N-end rule pathway of protein degradation where it conjugates Leu, Phe and, less efficiently, Met from aminoacyl-tRNAs to the N-termini of proteins containing an N-terminal arginine or lysine. This Janthinobacterium sp. (strain Marseille) (Minibacterium massiliensis) protein is Leucyl/phenylalanyl-tRNA--protein transferase.